The chain runs to 243 residues: Carboxy-S-adenosyl-L-methionine synthase (243 aa).

S-adenosyl-L-methionine-binding positions include Tyr40, Gly65–Ser67, Asp90–Asn91, Asp118–Ile119, Asn133, and Arg200.

Belongs to the class I-like SAM-binding methyltransferase superfamily. Cx-SAM synthase family. Homodimer.

It catalyses the reaction prephenate + S-adenosyl-L-methionine = carboxy-S-adenosyl-L-methionine + 3-phenylpyruvate + H2O. Its function is as follows. Catalyzes the conversion of S-adenosyl-L-methionine (SAM) to carboxy-S-adenosyl-L-methionine (Cx-SAM). This Shewanella frigidimarina (strain NCIMB 400) protein is Carboxy-S-adenosyl-L-methionine synthase.